Reading from the N-terminus, the 173-residue chain is Superoxide dismutase [Cu-Zn] (173 aa).

An N-terminal signal peptide occupies residues 1–19 (MKSLFIASTMVLMAFPAFA). Cu cation contacts are provided by H67, H69, and H92. The cysteines at positions 74 and 169 are disulfide-linked. Residues H92, H101, H109, and D112 each contribute to the Zn(2+) site. Cu cation is bound at residue H147.

Belongs to the Cu-Zn superoxide dismutase family. In terms of assembly, homodimer. The cofactor is Cu cation. Zn(2+) is required as a cofactor.

It localises to the periplasm. It carries out the reaction 2 superoxide + 2 H(+) = H2O2 + O2. In terms of biological role, destroys radicals which are normally produced within the cells and which are toxic to biological systems. In Brucella abortus biovar 1 (strain 9-941), this protein is Superoxide dismutase [Cu-Zn] (sodC).